Reading from the N-terminus, the 52-residue chain is Large ribosomal subunit protein bL33 (52 aa).

Belongs to the bacterial ribosomal protein bL33 family.

This chain is Large ribosomal subunit protein bL33 (rpmG), found in Chlamydia pneumoniae (Chlamydophila pneumoniae).